Here is a 297-residue protein sequence, read N- to C-terminus: MAELTALESLIEMGFPRGRAEKALALTGNQGIEAAMDWLMEHEDDPDVDEPLETPLSHILGREPTPSEQVGPEGSGSAAGESKPVLTEEERQEQTKRMLELVAQKQREREEREEREALEREKQRRRQGQELSAARQKLQEDEIRRAAEERRREKAEELAARQRVREKIERDKAERAQKYGGTVGSRSSPPATDPGPVPSSPRQEPPTKREYDQCRIQVRLPDGTSLTQTFRAREQLAAVRLYVELHRGEEPGQDQDPVQLLSGFPRRAFSEADMERPLQELGLVPSAVLIVAKKCPS.

A2 bears the N-acetylalanine mark. Positions 2–42 (AELTALESLIEMGFPRGRAEKALALTGNQGIEAAMDWLMEH) constitute a UBA domain. The segment at 38–212 (WLMEHEDDPD…QEPPTKREYD (175 aa)) is disordered. The segment covering 42-52 (HEDDPDVDEPL) has biased composition (acidic residues). An interaction with BRCA1 region spans residues 43–297 (EDDPDVDEPL…VLIVAKKCPS (255 aa)). Composition is skewed to basic and acidic residues over residues 86–122 (LTEE…EREK) and 137–177 (KLQE…ERAQ). The stretch at 86-172 (LTEEERQEQT…RVREKIERDK (87 aa)) forms a coiled coil. Phosphoserine is present on S199. S200 bears the Phosphoserine; by MAPK12 mark. A phosphothreonine mark is found at T207 and T229. Residues 209–291 (REYDQCRIQV…GLVPSAVLIV (83 aa)) enclose the UBX domain. Residue S270 is modified to Phosphoserine.

As to quaternary structure, component of a complex required to couple retrotranslocation, ubiquitination and deglycosylation composed of NGLY1, SAKS1, AMFR, VCP and RAD23B. Interacts with HOMER2. Interacts directly with VCP. Interacts with BRCA1 and BARD1; interaction takes place when BRCA1 is not autoubiquitinated bur is strongly enhanced in the presence of autoubiquitinated BRCA1.

The protein resides in the cytoplasm. Functionally, ubiquitin-binding protein that interacts with the BRCA1-BARD1 heterodimer, and regulates its activity. Specifically binds 'Lys-6'-linked polyubiquitin chains. Interaction with autoubiquitinated BRCA1, leads to inhibit the E3 ubiquitin-protein ligase activity of the BRCA1-BARD1 heterodimer. Component of a complex required to couple deglycosylation and proteasome-mediated degradation of misfolded proteins in the endoplasmic reticulum that are retrotranslocated in the cytosol. The protein is UBX domain-containing protein 1 (Ubxn1) of Rattus norvegicus (Rat).